A 137-amino-acid chain; its full sequence is MAALSRALGPLRTPAPPLWIGLFLVATGSQQSLAQPLPGNTTEATPRSLRASGSLCGPHAKAPYLCEATHEPAAARIRAQVPDTRWSRVGGQRFYSRVLSPLHRGPSGHTEASAQRSHMGKLKEPQPQDHKPGLGAS.

A signal peptide spans 1 to 34 (MAALSRALGPLRTPAPPLWIGLFLVATGSQQSLA). Residues 33–45 (LAQPLPGNTTEAT) show a composition bias toward polar residues. Disordered regions lie at residues 33–54 (LAQPLPGNTTEATPRSLRASGS) and 98–137 (VLSPLHRGPSGHTEASAQRSHMGKLKEPQPQDHKPGLGAS). A glycan (N-linked (GlcNAc...) asparagine) is linked at Asn-40. Residues 121 to 137 (KLKEPQPQDHKPGLGAS) show a composition bias toward basic and acidic residues.

It localises to the secreted. This is an uncharacterized protein from Homo sapiens (Human).